The following is a 231-amino-acid chain: NADH-ubiquinone oxidoreductase chain 4 (231 aa).

7 helical membrane-spanning segments follow: residues 1–21 (PIAG…YGII), 34–54 (VFLP…LTCL), 63–85 (IAYS…TPWG), 89–111 (AMAL…NTTY), 128–148 (MMPM…AIPP), 169–189 (TIIM…HMFL), and 211–231 (LLMT…ELVT).

The protein belongs to the complex I subunit 4 family.

It localises to the mitochondrion membrane. The catalysed reaction is a ubiquinone + NADH + 5 H(+)(in) = a ubiquinol + NAD(+) + 4 H(+)(out). Its function is as follows. Core subunit of the mitochondrial membrane respiratory chain NADH dehydrogenase (Complex I) that is believed to belong to the minimal assembly required for catalysis. Complex I functions in the transfer of electrons from NADH to the respiratory chain. The immediate electron acceptor for the enzyme is believed to be ubiquinone. The protein is NADH-ubiquinone oxidoreductase chain 4 (MT-ND4) of Sistrurus miliarius (Pigmy rattlesnake).